Here is a 684-residue protein sequence, read N- to C-terminus: Probable potassium transport system protein Kup (684 aa).

12 helical membrane-spanning segments follow: residues 19–39, 61–81, 104–124, 151–171, 177–197, 223–243, 255–275, 303–323, 352–372, 381–401, 407–427, and 433–453; these read ALLV…LYVM, VSLI…LIAL, WLVL…MLTP, QVIW…RFGT, AFGP…FIAL, MGLF…ALYS, LSWP…AVWL, LGAI…LISG, LYIP…IGYF, AYGL…YQYL, PAVV…VFFI, and FLHG…VMYV.

The protein belongs to the HAK/KUP transporter (TC 2.A.72) family.

It localises to the cell membrane. The catalysed reaction is K(+)(in) + H(+)(in) = K(+)(out) + H(+)(out). Functionally, transport of potassium into the cell. Likely operates as a K(+):H(+) symporter. This is Probable potassium transport system protein Kup from Lacticaseibacillus paracasei (strain ATCC 334 / BCRC 17002 / CCUG 31169 / CIP 107868 / KCTC 3260 / NRRL B-441) (Lactobacillus paracasei).